Reading from the N-terminus, the 762-residue chain is 5-methyltetrahydropteroyltriglutamate--homocysteine methyltransferase (762 aa).

Residues 18–21 (REWK) and lysine 112 each bind 5-methyltetrahydropteroyltri-L-glutamate. Residues 435 to 437 (IGS) and glutamate 488 each bind L-homocysteine. L-methionine-binding positions include 435–437 (IGS) and glutamate 488. Residues 519-520 (RC) and tryptophan 565 each bind 5-methyltetrahydropteroyltri-L-glutamate. Residue aspartate 603 coordinates L-homocysteine. Aspartate 603 lines the L-methionine pocket. 5-methyltetrahydropteroyltri-L-glutamate is bound at residue glutamate 609. Positions 645, 647, and 669 each coordinate Zn(2+). Histidine 698 acts as the Proton donor in catalysis. Cysteine 730 provides a ligand contact to Zn(2+).

The protein belongs to the vitamin-B12 independent methionine synthase family. Zn(2+) is required as a cofactor.

It catalyses the reaction 5-methyltetrahydropteroyltri-L-glutamate + L-homocysteine = tetrahydropteroyltri-L-glutamate + L-methionine. The protein operates within amino-acid biosynthesis; L-methionine biosynthesis via de novo pathway; L-methionine from L-homocysteine (MetE route): step 1/1. In terms of biological role, catalyzes the transfer of a methyl group from 5-methyltetrahydrofolate to homocysteine resulting in methionine formation. The sequence is that of 5-methyltetrahydropteroyltriglutamate--homocysteine methyltransferase from Bacillus licheniformis (strain ATCC 14580 / DSM 13 / JCM 2505 / CCUG 7422 / NBRC 12200 / NCIMB 9375 / NCTC 10341 / NRRL NRS-1264 / Gibson 46).